A 117-amino-acid polypeptide reads, in one-letter code: MRVKGGSTTRQRRRRWLKLAKGYWGHKSIGFKTAKQAVVKSWTYAFRDRKQRKRDFRKLWISRINAAARNQGISYSQLMHKIKQSNIEINRKMLAEMAIHHQSDFENIVKLAIAKSA.

Belongs to the bacterial ribosomal protein bL20 family.

Functionally, binds directly to 23S ribosomal RNA and is necessary for the in vitro assembly process of the 50S ribosomal subunit. It is not involved in the protein synthesizing functions of that subunit. The chain is Large ribosomal subunit protein bL20 from Mesomycoplasma hyopneumoniae (strain 232) (Mycoplasma hyopneumoniae).